The sequence spans 77 residues: MAFLKKSLFLVLFLGLVPLSLCESEKREGENEEEQEDDQSEEKRSLGSFLKGVGTTLASVGKVVSDQFGKLLQAGQG.

The N-terminal stretch at 1 to 22 is a signal peptide; it reads MAFLKKSLFLVLFLGLVPLSLC. Residues 23 to 42 constitute a propeptide that is removed on maturation; sequence ESEKREGENEEEQEDDQSEE. Residues 24–45 form a disordered region; that stretch reads SEKREGENEEEQEDDQSEEKRS. Positions 30 to 40 are enriched in acidic residues; it reads ENEEEQEDDQS. Glutamine 76 is subject to Glutamine amide.

Belongs to the frog skin active peptide (FSAP) family. Dermatoxin subfamily. As to expression, highest expression in skin and to a lesser extent in brain and intestine.

Its subcellular location is the secreted. It localises to the target cell membrane. Functionally, possesses a potent antimicrobial activity against Gram-positive bacteria B.megaterium, C.glutamicum and S.aureus and mollicutes A.laidlawii and S.melliferum. Less active against Gram-negative bacteria B.cepacia, P.aeruginosa, S.typhimurium and S.meliloti. Probably acts by disturbing membrane functions with its amphipathic structure. This Phyllomedusa bicolor (Two-colored leaf frog) protein is Dermatoxin-B1.